Consider the following 111-residue polypeptide: Small ribosomal subunit protein bS6 (111 aa).

This sequence belongs to the bacterial ribosomal protein bS6 family.

Functionally, binds together with bS18 to 16S ribosomal RNA. The protein is Small ribosomal subunit protein bS6 of Francisella philomiragia subsp. philomiragia (strain ATCC 25017 / CCUG 19701 / FSC 153 / O#319-036).